Here is a 366-residue protein sequence, read N- to C-terminus: GTP-binding protein 10 (366 aa).

In terms of domain architecture, Obg spans 13–148 (GNFIDNLRIF…RIVHLDLKVI (136 aa)). The OBG-type G domain maps to 149-344 (ADVGLVGFPN…LKSCIRKALD (196 aa)). GTP contacts are provided by residues 155–162 (GFPNAGKS), 202–206 (DLPGL), and 278–281 (NKMD). A compositionally biased stretch (basic and acidic residues) spans 346–355 (QDGKESDAHR). Residues 346 to 366 (QDGKESDAHRSKQLLNLQSSS) are disordered.

It belongs to the TRAFAC class OBG-HflX-like GTPase superfamily. OBG GTPase family.

It localises to the nucleus. It is found in the nucleolus. Functionally, may be involved in the ribosome maturation process. The sequence is that of GTP-binding protein 10 (Gtpbp10) from Mus musculus (Mouse).